Here is a 241-residue protein sequence, read N- to C-terminus: Pyridoxine 5'-phosphate synthase (241 aa).

Residue Asn-7 coordinates 3-amino-2-oxopropyl phosphate. 9 to 10 (DH) serves as a coordination point for 1-deoxy-D-xylulose 5-phosphate. Arg-18 contributes to the 3-amino-2-oxopropyl phosphate binding site. His-43 serves as the catalytic Proton acceptor. 1-deoxy-D-xylulose 5-phosphate-binding residues include Arg-45 and His-50. The active-site Proton acceptor is the Glu-70. Thr-100 contributes to the 1-deoxy-D-xylulose 5-phosphate binding site. Catalysis depends on His-191, which acts as the Proton donor. Residues Gly-192 and 213 to 214 (GH) contribute to the 3-amino-2-oxopropyl phosphate site.

The protein belongs to the PNP synthase family. Homooctamer; tetramer of dimers.

The protein localises to the cytoplasm. The catalysed reaction is 3-amino-2-oxopropyl phosphate + 1-deoxy-D-xylulose 5-phosphate = pyridoxine 5'-phosphate + phosphate + 2 H2O + H(+). The protein operates within cofactor biosynthesis; pyridoxine 5'-phosphate biosynthesis; pyridoxine 5'-phosphate from D-erythrose 4-phosphate: step 5/5. In terms of biological role, catalyzes the complicated ring closure reaction between the two acyclic compounds 1-deoxy-D-xylulose-5-phosphate (DXP) and 3-amino-2-oxopropyl phosphate (1-amino-acetone-3-phosphate or AAP) to form pyridoxine 5'-phosphate (PNP) and inorganic phosphate. The polypeptide is Pyridoxine 5'-phosphate synthase (Nitrosospira multiformis (strain ATCC 25196 / NCIMB 11849 / C 71)).